Consider the following 592-residue polypeptide: V-type ATP synthase alpha chain (592 aa).

Gly-233–Thr-240 is an ATP binding site.

This sequence belongs to the ATPase alpha/beta chains family.

It carries out the reaction ATP + H2O + 4 H(+)(in) = ADP + phosphate + 5 H(+)(out). Functionally, produces ATP from ADP in the presence of a proton gradient across the membrane. The V-type alpha chain is a catalytic subunit. This Clostridium botulinum (strain Loch Maree / Type A3) protein is V-type ATP synthase alpha chain.